The sequence spans 95 residues: Integration host factor subunit beta (95 aa).

The protein belongs to the bacterial histone-like protein family. In terms of assembly, heterodimer of an alpha and a beta chain.

Its function is as follows. This protein is one of the two subunits of integration host factor, a specific DNA-binding protein that functions in genetic recombination as well as in transcriptional and translational control. The sequence is that of Integration host factor subunit beta from Shewanella halifaxensis (strain HAW-EB4).